Consider the following 160-residue polypeptide: Transcription elongation factor GreA (160 aa).

The stretch at 1–72 (MAEKTYPMTL…QISSLETKIR (72 aa)) forms a coiled coil.

Belongs to the GreA/GreB family.

Necessary for efficient RNA polymerase transcription elongation past template-encoded arresting sites. The arresting sites in DNA have the property of trapping a certain fraction of elongating RNA polymerases that pass through, resulting in locked ternary complexes. Cleavage of the nascent transcript by cleavage factors such as GreA or GreB allows the resumption of elongation from the new 3'terminus. GreA releases sequences of 2 to 3 nucleotides. The polypeptide is Transcription elongation factor GreA (Streptococcus sanguinis (strain SK36)).